Here is a 405-residue protein sequence, read N- to C-terminus: Arginine deiminase (405 aa).

The active-site Amidino-cysteine intermediate is the Cys-395.

The protein belongs to the arginine deiminase family.

The protein localises to the cytoplasm. The enzyme catalyses L-arginine + H2O = L-citrulline + NH4(+). Its pathway is amino-acid degradation; L-arginine degradation via ADI pathway; carbamoyl phosphate from L-arginine: step 1/2. The sequence is that of Arginine deiminase from Rhodococcus erythropolis (strain PR4 / NBRC 100887).